The sequence spans 160 residues: 6,7-dimethyl-8-ribityllumazine synthase (160 aa).

5-amino-6-(D-ribitylamino)uracil contacts are provided by residues F22, 57–59, and 81–83; these read TYE and TII. (2S)-2-hydroxy-3-oxobutyl phosphate is bound at residue 86 to 87; it reads QT. The Proton donor role is filled by H89. L114 is a 5-amino-6-(D-ribitylamino)uracil binding site. R128 is a binding site for (2S)-2-hydroxy-3-oxobutyl phosphate.

This sequence belongs to the DMRL synthase family. As to quaternary structure, forms an icosahedral capsid composed of 60 subunits, arranged as a dodecamer of pentamers.

The catalysed reaction is (2S)-2-hydroxy-3-oxobutyl phosphate + 5-amino-6-(D-ribitylamino)uracil = 6,7-dimethyl-8-(1-D-ribityl)lumazine + phosphate + 2 H2O + H(+). Its pathway is cofactor biosynthesis; riboflavin biosynthesis; riboflavin from 2-hydroxy-3-oxobutyl phosphate and 5-amino-6-(D-ribitylamino)uracil: step 1/2. In terms of biological role, catalyzes the formation of 6,7-dimethyl-8-ribityllumazine by condensation of 5-amino-6-(D-ribitylamino)uracil with 3,4-dihydroxy-2-butanone 4-phosphate. This is the penultimate step in the biosynthesis of riboflavin. In Buchnera aphidicola subsp. Acyrthosiphon pisum (strain APS) (Acyrthosiphon pisum symbiotic bacterium), this protein is 6,7-dimethyl-8-ribityllumazine synthase.